Reading from the N-terminus, the 1182-residue chain is NACHT, LRR and PYD domains-containing protein 1a (1182 aa).

The interval 1-23 (MEESQSKQESSTKVAQHEGQEDV) is disordered. The 310-residue stretch at 133–442 (QLVIIEGAAG…EFFAAMSYIL (310 aa)) folds into the NACHT domain. 139–146 (GAAGIGKS) serves as a coordination point for ATP. LRR repeat units lie at residues 634-655 (NLEELDLSGNPLSYYAVHSLCT), 691-711 (SLTELDLQLNDLGDGGVKMLC), and 720-743 (NLSILWLDQASLSDQVIAELRTLE). Positions 780 to 806 (QQRQQSGDKHMEPLGTEDEFWGPTGPV) are disordered. Residues 799–932 (FWGPTGPVTT…HYAVLENPSF (134 aa)) are ZU5. An FIIND domain is found at 799-1082 (FWGPTGPVTT…LRPALPKIAT (284 aa)). A UPA region spans residues 933 to 1082 (SPMGILLRMI…LRPALPKIAT (150 aa)). Residues 1092–1175 (HFMDQHREQL…HLVMDILEKL (84 aa)) form the CARD domain.

Belongs to the NLRP family. In terms of assembly, interacts (via LRR repeats) with BCL2 and BCL2L1 (via the loop between motifs BH4 and BH3). Interacts with NOD2; this interaction is enhanced in the presence of muramyl dipeptide (MDP) and increases IL1B release. Interacts with EIF2AK2/PKR; this interaction requires EIF2AK2 activity, is accompanied by EIF2AK2 autophosphorylation and promotes inflammasome assembly in response to danger-associated signals. Interacts with MEFV; this interaction targets Nlrp1a to degradation by autophagy, hence preventing excessive IL1B- and IL18-mediated inflammation. Interacts with DPP9; leading to inhibit activation of the inflammasome. DPP9 acts via formation of a ternary complex, composed of a DPP9 homodimer, one full-length Nlrp1a protein, and one cleaved C-terminus of Nlrp1a (NACHT, LRR and PYD domains-containing protein 1a, C-terminus). Interacts with DPP8; leading to inhibit activation of the inflammasome, probably via formation of a ternary complex with DPP8. Interacts with the C-terminal part of Nlrp1a (NACHT, LRR and PYD domains-containing protein 1a, C-terminus) in absence of pathogens and other damage-associated signals. As to quaternary structure, interacts with the N-terminal part of Nlrp1a (NACHT, LRR and PYD domains-containing protein 1a, N-terminus) in absence of pathogens and other damage-associated signals. Homomultimer; forms the Nlrp1a inflammasome polymeric complex, a filament composed of homopolymers of this form in response to pathogens and other damage-associated signals. Interacts (via CARD domain) with CASP1 (via CARD domain); leading to CASP1 activation. Autocatalytically cleaved. Autocatalytic cleavage in FIIND region occurs constitutively, prior to activation signals, and is required for inflammasome activity (IL1B release), possibly by facilitating CASP1 binding. Both N- and C-terminal parts remain associated non-covalently. In terms of processing, ubiquitinated in response to pathogen-associated signals, leading to its degradation by the proteasome and subsequent release of the cleaved C-terminal part of the protein (NACHT, LRR and PYD domains-containing protein 1a, C-terminus), which polymerizes and forms the Nlrp1a inflammasome. As to expression, highly expressed in hematopoietic stem cells and progenitor cells of both myeloid and lymphoid origin. The expression is highly strain-dependent. Not expressed in Balb/cJ animals, but widely expressed in C57BL/6J. Expressed in macrophages resistant to Bacillus anthracis lethal toxin, but not in toxin-sensitive macrophages, except in CAST/EiJ strain.

It is found in the cytoplasm. It localises to the cytosol. The protein resides in the nucleus. The protein localises to the inflammasome. Its activity is regulated as follows. Nlrp1a inflammasome is activated by pathogens and other damage-associated signals: activation promotes ubiquitination and degradation of the N-terminal part, releasing the cleaved C-terminal part of the protein (NACHT, LRR and PYD domains-containing protein 1a, C-terminus), which polymerizes and forms the Nlrp1a inflammasome. Nlrp1a inflammasome is inhibited by DPP8 and DPP9, which sequester the C-terminal fragment of Nlrp1a (NACHT, LRR and PYD domains-containing protein 1a, C-terminus) in a ternary complex, thereby preventing Nlrp1a oligomerization and activation. Nlrp1a inflammasome is activated by Val-boroPro (Talabostat, PT-100), an inhibitor of dipeptidyl peptidases DPP8 and DPP9. Val-boroPro relieves inhibition of DPP8 and/or DPP9 by promoting disruption of the ternary complex, releasing its C-terminal part from autoinhibition. Functionally, acts as the sensor component of the Nlrp1a inflammasome, which mediates inflammasome activation in response to various pathogen-associated signals, leading to subsequent pyroptosis. Inflammasomes are supramolecular complexes that assemble in the cytosol in response to pathogens and other damage-associated signals and play critical roles in innate immunity and inflammation. Acts as a recognition receptor (PRR): recognizes specific pathogens and other damage-associated signals, and mediates the formation of the inflammasome polymeric complex. In response to pathogen-associated signals, the N-terminal part of Nlrp1a is degraded by the proteasome, releasing the cleaved C-terminal part of the protein (NACHT, LRR and PYD domains-containing protein 1a, C-terminus), which polymerizes to initiate the formation of the inflammasome complex: the inflammasome recruits pro-caspase-1 (proCASP1) and promotes caspase-1 (CASP1) activation, which subsequently cleaves and activates inflammatory cytokines IL1B and IL18 and gasdermin-D (GSDMD), leading to pyroptosis. In the absence of GSDMD expression, the Nlrp1a inflammasome is able to recruit and activate CASP8, leading to activation of gasdermin-E (GSDME). Activation of Nlrp1a inflammasome is also required for HMGB1 secretion; the active cytokines and HMGB1 stimulate inflammatory responses. When activated in the bone marrow, induces the pyroptosis of hematopoietic stem cells and progenitor cells of both myeloid and lymphoid lineages, hence allowing the removal of damaged cells, and the release of IL1B, which induces granulopoiesis. Its function is as follows. Constitutes the precursor of the Nlrp1a inflammasome, which mediates autoproteolytic processing within the FIIND domain to generate the N-terminal and C-terminal parts, which are associated non-covalently in absence of pathogens and other damage-associated signals. Regulatory part that prevents formation of the Nlrp1a inflammasome: in absence of pathogens and other damage-associated signals, interacts with the C-terminal part of Nlrp1a (NACHT, LRR and PYD domains-containing protein 1a, C-terminus), preventing activation of the Nlrp1a inflammasome. In response to pathogen-associated signals, this part is ubiquitinated and degraded by the proteasome, releasing the cleaved C-terminal part of the protein, which polymerizes and forms the Nlrp1a inflammasome. In terms of biological role, constitutes the active part of the Nlrp1a inflammasome. In absence of pathogens and other damage-associated signals, interacts with the N-terminal part of Nlrp1a (NACHT, LRR and PYD domains-containing protein 1a, N-terminus), preventing activation of the Nlrp1a inflammasome. In response to pathogen-associated signals, the N-terminal part of Nlrp1a is degraded by the proteasome, releasing this form, which polymerizes to form the Nlrp1a inflammasome complex: the Nlrp1a inflammasome complex then directly recruits pro-caspase-1 (proCASP1) and promotes caspase-1 (CASP1) activation, leading to gasdermin-D (GSDMD) cleavage and subsequent pyroptosis. This Mus musculus (Mouse) protein is NACHT, LRR and PYD domains-containing protein 1a.